Here is a 100-residue protein sequence, read N- to C-terminus: uncharacterized protein (100 aa).

Lys-98 participates in a covalent cross-link: Isoglutamyl lysine isopeptide (Lys-Gln) (interchain with Q-Cter in protein Pup).

This is an uncharacterized protein from Mycobacterium tuberculosis (strain CDC 1551 / Oshkosh).